The following is a 418-amino-acid chain: Tryptophan synthase beta chain (418 aa).

The span at 1–17 shows a compositional bias: polar residues; it reads MTSTLPNASTPDPSSLQ. Residues 1–23 are disordered; it reads MTSTLPNASTPDPSSLQPAVRPG. K111 is modified (N6-(pyridoxal phosphate)lysine).

Belongs to the TrpB family. Tetramer of two alpha and two beta chains. It depends on pyridoxal 5'-phosphate as a cofactor.

It catalyses the reaction (1S,2R)-1-C-(indol-3-yl)glycerol 3-phosphate + L-serine = D-glyceraldehyde 3-phosphate + L-tryptophan + H2O. Its pathway is amino-acid biosynthesis; L-tryptophan biosynthesis; L-tryptophan from chorismate: step 5/5. In terms of biological role, the beta subunit is responsible for the synthesis of L-tryptophan from indole and L-serine. The sequence is that of Tryptophan synthase beta chain from Synechococcus sp. (strain CC9605).